A 280-amino-acid chain; its full sequence is 4-deoxy-L-threo-5-hexosulose-uronate ketol-isomerase (280 aa).

Zn(2+) contacts are provided by His-198, His-200, Glu-205, and His-247.

It belongs to the KduI family. Requires Zn(2+) as cofactor.

It catalyses the reaction 5-dehydro-4-deoxy-D-glucuronate = 3-deoxy-D-glycero-2,5-hexodiulosonate. It participates in glycan metabolism; pectin degradation; 2-dehydro-3-deoxy-D-gluconate from pectin: step 4/5. Its function is as follows. Catalyzes the isomerization of 5-dehydro-4-deoxy-D-glucuronate to 3-deoxy-D-glycero-2,5-hexodiulosonate. The polypeptide is 4-deoxy-L-threo-5-hexosulose-uronate ketol-isomerase (Lachnospira eligens (strain ATCC 27750 / DSM 3376 / VPI C15-48 / C15-B4) (Eubacterium eligens)).